Reading from the N-terminus, the 776-residue chain is U3 small nucleolar RNA-associated protein 4 (776 aa).

6 WD repeats span residues 35–40, 132–169, 178–214, 230–266, 271–308, and 417–452; these read RCRFVD, LPLR…VLID, EHDT…RIWS, KVDK…KFWD, TLNQ…FQFS, and VCKL…KVFH.

As to quaternary structure, interacts with snoRNA U3. Interacts with MPP10. Component of the ribosomal small subunit (SSU) processome composed of at least 40 protein subunits and snoRNA U3. In the absence of snoRNA3, forms a complex with other t-UTPs. This complex can associate with pre-18S ribosomal RNAs.

Its subcellular location is the nucleus. It is found in the nucleolus. Functionally, involved in nucleolar processing of pre-18S ribosomal RNA. Required for optimal pre-ribosomal RNA transcription by RNA polymerase I together with a subset of U3 proteins required for transcription (t-UTPs). This is U3 small nucleolar RNA-associated protein 4 (UTP4) from Saccharomyces cerevisiae (strain ATCC 204508 / S288c) (Baker's yeast).